The chain runs to 210 residues: Cytochrome c oxidase subunit 2 (210 aa).

Over 1 to 15 the chain is Mitochondrial intermembrane; that stretch reads MSFILTFWMIFLMDS. A helical transmembrane segment spans residues 16 to 36; that stretch reads IIVLISFSIFLSVWICALIIA. At 37-63 the chain is on the mitochondrial matrix side; that stretch reads TVLTVTKINNIYCTWDFISSKFIDTYW. Residues 64 to 84 traverse the membrane as a helical segment; sequence FVLGMMFILCLLLRLCLLLYF. Over 85 to 210 the chain is Mitochondrial intermembrane; that stretch reads SCINFVSFDL…GFMPIVINFI (126 aa). The Cu cation site is built by His157, Cys192, Glu194, Cys196, His200, and Met203. Glu194 is a Mg(2+) binding site.

The protein belongs to the cytochrome c oxidase subunit 2 family. As to quaternary structure, component of the cytochrome c oxidase (complex IV, CIV), a multisubunit enzyme composed of a catalytic core of 3 subunits and several supernumerary subunits. The complex exists as a monomer or a dimer and forms supercomplexes (SCs) in the inner mitochondrial membrane with ubiquinol-cytochrome c oxidoreductase (cytochrome b-c1 complex, complex III, CIII). It depends on Cu cation as a cofactor.

It is found in the mitochondrion inner membrane. It catalyses the reaction 4 Fe(II)-[cytochrome c] + O2 + 8 H(+)(in) = 4 Fe(III)-[cytochrome c] + 2 H2O + 4 H(+)(out). Component of the cytochrome c oxidase, the last enzyme in the mitochondrial electron transport chain which drives oxidative phosphorylation. The respiratory chain contains 3 multisubunit complexes succinate dehydrogenase (complex II, CII), ubiquinol-cytochrome c oxidoreductase (cytochrome b-c1 complex, complex III, CIII) and cytochrome c oxidase (complex IV, CIV), that cooperate to transfer electrons derived from NADH and succinate to molecular oxygen, creating an electrochemical gradient over the inner membrane that drives transmembrane transport and the ATP synthase. Cytochrome c oxidase is the component of the respiratory chain that catalyzes the reduction of oxygen to water. Electrons originating from reduced cytochrome c in the intermembrane space (IMS) are transferred via the dinuclear copper A center (CU(A)) of subunit 2 and heme A of subunit 1 to the active site in subunit 1, a binuclear center (BNC) formed by heme A3 and copper B (CU(B)). The BNC reduces molecular oxygen to 2 water molecules using 4 electrons from cytochrome c in the IMS and 4 protons from the mitochondrial matrix. The protein is Cytochrome c oxidase subunit 2 (COXII) of Trypanosoma brucei brucei.